The following is a 74-amino-acid chain: uncharacterized protein (74 aa).

This is an uncharacterized protein from Invertebrate iridescent virus 3 (IIV-3).